The primary structure comprises 541 residues: Membrane protein insertase YidC (541 aa).

The next 6 helical transmembrane spans lie at 6–26 (NLLL…WESD), 326–346 (VVDY…LMFF), 349–369 (LVHN…GLLY), 420–440 (GGCL…WVLL), 457–477 (LSVQ…MWAM), and 500–520 (MIFT…WLVG).

Belongs to the OXA1/ALB3/YidC family. Type 1 subfamily. As to quaternary structure, interacts with the Sec translocase complex via SecD. Specifically interacts with transmembrane segments of nascent integral membrane proteins during membrane integration.

The protein localises to the cell inner membrane. Functionally, required for the insertion and/or proper folding and/or complex formation of integral membrane proteins into the membrane. Involved in integration of membrane proteins that insert both dependently and independently of the Sec translocase complex, as well as at least some lipoproteins. Aids folding of multispanning membrane proteins. This chain is Membrane protein insertase YidC, found in Shewanella amazonensis (strain ATCC BAA-1098 / SB2B).